A 254-amino-acid polypeptide reads, in one-letter code: Alcohol dehydrogenase (254 aa).

Phe10–Leu33 serves as a coordination point for NAD(+). Ser138 serves as a coordination point for substrate. The active-site Proton acceptor is Tyr151.

Belongs to the short-chain dehydrogenases/reductases (SDR) family. In terms of assembly, homodimer.

It catalyses the reaction a primary alcohol + NAD(+) = an aldehyde + NADH + H(+). It carries out the reaction a secondary alcohol + NAD(+) = a ketone + NADH + H(+). This is Alcohol dehydrogenase (Adh) from Drosophila adiastola (Fruit fly).